Consider the following 571-residue polypeptide: Phosphomethylpyrimidine synthase (571 aa).

Substrate contacts are provided by residues N201, M230, Y259, H295, 315–317 (SRG), 356–359 (DALR), and E395. A Zn(2+)-binding site is contributed by H399. Substrate is bound at residue Y422. A Zn(2+)-binding site is contributed by H463. The [4Fe-4S] cluster site is built by C545, C548, and C553.

Belongs to the ThiC family. [4Fe-4S] cluster serves as cofactor.

The enzyme catalyses 5-amino-1-(5-phospho-beta-D-ribosyl)imidazole + S-adenosyl-L-methionine = 4-amino-2-methyl-5-(phosphooxymethyl)pyrimidine + CO + 5'-deoxyadenosine + formate + L-methionine + 3 H(+). It participates in cofactor biosynthesis; thiamine diphosphate biosynthesis. Its function is as follows. Catalyzes the synthesis of the hydroxymethylpyrimidine phosphate (HMP-P) moiety of thiamine from aminoimidazole ribotide (AIR) in a radical S-adenosyl-L-methionine (SAM)-dependent reaction. In Chlorobium phaeovibrioides (strain DSM 265 / 1930) (Prosthecochloris vibrioformis (strain DSM 265)), this protein is Phosphomethylpyrimidine synthase.